A 251-amino-acid polypeptide reads, in one-letter code: Dihydroorotate dehydrogenase B (NAD(+)), electron transfer subunit homolog (251 aa).

The FAD-binding FR-type domain maps to 2–101 (LAELNAEVLE…FLPLGKRLFS (100 aa)). The [2Fe-2S] cluster site is built by cysteine 217, cysteine 222, cysteine 225, and cysteine 238.

The protein belongs to the PyrK family. The cofactor is [2Fe-2S] cluster. FAD is required as a cofactor.

The chain is Dihydroorotate dehydrogenase B (NAD(+)), electron transfer subunit homolog from Aquifex aeolicus (strain VF5).